The sequence spans 193 residues: tRNA (cytidine(56)-2'-O)-methyltransferase (193 aa).

Residues Leu-86 and Gly-115 to Val-119 contribute to the S-adenosyl-L-methionine site.

It belongs to the aTrm56 family. In terms of assembly, homodimer.

The protein resides in the cytoplasm. It carries out the reaction cytidine(56) in tRNA + S-adenosyl-L-methionine = 2'-O-methylcytidine(56) in tRNA + S-adenosyl-L-homocysteine + H(+). In terms of biological role, specifically catalyzes the AdoMet-dependent 2'-O-ribose methylation of cytidine at position 56 in tRNAs. This chain is tRNA (cytidine(56)-2'-O)-methyltransferase, found in Haloquadratum walsbyi (strain DSM 16790 / HBSQ001).